Consider the following 136-residue polypeptide: Large ribosomal subunit protein uL13 (136 aa).

Belongs to the universal ribosomal protein uL13 family. In terms of assembly, part of the 50S ribosomal subunit.

Its function is as follows. This protein is one of the early assembly proteins of the 50S ribosomal subunit, although it is not seen to bind rRNA by itself. It is important during the early stages of 50S assembly. The chain is Large ribosomal subunit protein uL13 from Thermoplasma acidophilum (strain ATCC 25905 / DSM 1728 / JCM 9062 / NBRC 15155 / AMRC-C165).